A 33-amino-acid polypeptide reads, in one-letter code: Protein YtiC (33 aa).

The helical transmembrane segment at 10–29 threads the bilayer; that stretch reads FDMLSIYIIYKLIVSNNTWL.

It is found in the cell inner membrane. In Escherichia coli (strain K12), this protein is Protein YtiC.